The following is a 198-amino-acid chain: Chromophore lyase CpcS/CpeS 2 (198 aa).

This sequence belongs to the CpcS/CpeS biliprotein lyase family.

It is found in the plastid. The protein localises to the organellar chromatophore. Its function is as follows. Covalently attaches a chromophore to Cys residue(s) of phycobiliproteins. This chain is Chromophore lyase CpcS/CpeS 2, found in Paulinella chromatophora.